The sequence spans 987 residues: Transposase for transposon Tn4430 (987 aa).

It belongs to the transposase 7 family.

Its function is as follows. Required for transposition of transposon Tn4430. The polypeptide is Transposase for transposon Tn4430 (tnpA) (Bacillus thuringiensis).